The primary structure comprises 542 residues: Membrane protein insertase YidC (542 aa).

The next 5 membrane-spanning stretches (helical) occupy residues 7–27 (LLVMGLLLVSFLIFTQWQQDF), 338–358 (FALLTFIQSIVTNWGLAIIGV), 417–437 (MGGCLPILIQMPIFIALYWTF), 455–475 (LSAQDPYYILPLLMGASMFLL), and 494–514 (FMPVMFTVFFLWFPSGLVLYW).

This sequence belongs to the OXA1/ALB3/YidC family. Type 1 subfamily. In terms of assembly, interacts with the Sec translocase complex via SecD. Specifically interacts with transmembrane segments of nascent integral membrane proteins during membrane integration.

The protein localises to the cell inner membrane. Functionally, required for the insertion and/or proper folding and/or complex formation of integral membrane proteins into the membrane. Involved in integration of membrane proteins that insert both dependently and independently of the Sec translocase complex, as well as at least some lipoproteins. Aids folding of multispanning membrane proteins. The protein is Membrane protein insertase YidC of Actinobacillus pleuropneumoniae serotype 3 (strain JL03).